We begin with the raw amino-acid sequence, 399 residues long: Serine/threonine-protein kinase PKZ1 (399 aa).

Residues 30-50 form a disordered region; it reads PMQCAYQTQSHSNPEGAKRGR. In terms of domain architecture, Protein kinase spans 92–371; sequence WQLFDQIGAG…ADQMLQHPWM (280 aa). ATP contacts are provided by residues 98–106 and K121; that span reads IGAGAFGVV. The active-site Proton acceptor is D219.

The protein belongs to the protein kinase superfamily. CAMK Ser/Thr protein kinase family.

The enzyme catalyses L-seryl-[protein] + ATP = O-phospho-L-seryl-[protein] + ADP + H(+). The catalysed reaction is L-threonyl-[protein] + ATP = O-phospho-L-threonyl-[protein] + ADP + H(+). May regulate an early stage of the zoospore pathway. The polypeptide is Serine/threonine-protein kinase PKZ1 (Phytophthora infestans (strain T30-4) (Potato late blight agent)).